Reading from the N-terminus, the 188-residue chain is Capsid protein (188 aa).

A compositionally biased stretch (basic residues) spans 150–181 (RRRGGARASRSPRRRTPSPRRRRSQSPRRRRS). Positions 150 to 188 (RRRGGARASRSPRRRTPSPRRRRSQSPRRRRSQSPSANC) are disordered. A phosphoserine; by host mark is found at Ser160, Ser167, and Ser175. Residues 160–166 (SPRRRTP) form a 1; half-length repeat. The 3 X 8 AA repeats of S-P-R-R-R-[PR]-S-Q stretch occupies residues 160–182 (SPRRRTPSPRRRRSQSPRRRRSQ). The short motif at 163–180 (RRTPSPRRRRSQSPRRRR) is the Bipartite nuclear localization signal element. Tandem repeats lie at residues 167–174 (SPRRRRSQ) and 175–182 (SPRRRRSQ). An RNA binding region spans residues 182-188 (QSPSANC).

Belongs to the orthohepadnavirus core antigen family. Homodimerizes, then multimerizes. Interacts with cytosol exposed regions of viral L glycoprotein present in the reticulum-to-Golgi compartment. Interacts with human FLNB. Phosphorylated form interacts with host importin alpha; this interaction depends on the exposure of the NLS, which itself depends upon genome maturation and/or phosphorylation of the capsid protein. Interacts with host NUP153. In terms of processing, phosphorylated by host SRPK1, SRPK2, and maybe protein kinase C or GAPDH. Phosphorylation is critical for pregenomic RNA packaging. Protein kinase C phosphorylation is stimulated by HBx protein and may play a role in transport of the viral genome to the nucleus at the late step during the viral replication cycle.

The protein localises to the virion. It localises to the host cytoplasm. Its function is as follows. Self assembles to form an icosahedral capsid. Most capsids appear to be large particles with an icosahedral symmetry of T=4 and consist of 240 copies of capsid protein, though a fraction forms smaller T=3 particles consisting of 180 capsid proteins. Entering capsids are transported along microtubules to the nucleus. Phosphorylation of the capsid is thought to induce exposure of nuclear localization signal in the C-terminal portion of the capsid protein that allows binding to the nuclear pore complex via the importin (karyopherin-) alpha and beta. Capsids are imported in intact form through the nuclear pore into the nuclear basket, where it probably binds NUP153. Only capsids that contain the mature viral genome can release the viral DNA and capsid protein into the nucleoplasm. Immature capsids get stuck in the basket. Capsids encapsulate the pre-genomic RNA and the P protein. Pre-genomic RNA is reverse-transcribed into DNA while the capsid is still in the cytoplasm. The capsid can then either be directed to the nucleus, providing more genomes for transcription, or bud through the endoplasmic reticulum to provide new virions. The sequence is that of Capsid protein from Marmota monax (Woodchuck).